The chain runs to 394 residues: Mitogen-activated protein kinase homolog D5 (394 aa).

The region spanning R62–L347 is the Protein kinase domain. Residues I68–V76 and K91 contribute to the ATP site. D188 functions as the Proton acceptor in the catalytic mechanism. T220 bears the Phosphothreonine mark. The short motif at T220–Y222 is the TXY element. Phosphotyrosine is present on Y222.

This sequence belongs to the protein kinase superfamily. CMGC Ser/Thr protein kinase family. MAP kinase subfamily. Mg(2+) serves as cofactor. In terms of processing, dually phosphorylated on Thr-220 and Tyr-222, which activates the enzyme. As to expression, leaves, roots, root apices, and dormant and growing axillary buds.

The enzyme catalyses L-seryl-[protein] + ATP = O-phospho-L-seryl-[protein] + ADP + H(+). It carries out the reaction L-threonyl-[protein] + ATP = O-phospho-L-threonyl-[protein] + ADP + H(+). With respect to regulation, activated by tyrosine and threonine phosphorylation. This is Mitogen-activated protein kinase homolog D5 from Pisum sativum (Garden pea).